Here is a 273-residue protein sequence, read N- to C-terminus: 3-methyl-2-oxobutanoate hydroxymethyltransferase (273 aa).

Mg(2+) is bound by residues Asp-53 and Asp-92. Residues 53–54, Asp-92, and Lys-120 contribute to the 3-methyl-2-oxobutanoate site; that span reads DS. Glu-122 lines the Mg(2+) pocket. The active-site Proton acceptor is the Glu-189.

This sequence belongs to the PanB family. As to quaternary structure, homodecamer; pentamer of dimers. The cofactor is Mg(2+).

The protein resides in the cytoplasm. The catalysed reaction is 3-methyl-2-oxobutanoate + (6R)-5,10-methylene-5,6,7,8-tetrahydrofolate + H2O = 2-dehydropantoate + (6S)-5,6,7,8-tetrahydrofolate. Its pathway is cofactor biosynthesis; (R)-pantothenate biosynthesis; (R)-pantoate from 3-methyl-2-oxobutanoate: step 1/2. Its function is as follows. Catalyzes the reversible reaction in which hydroxymethyl group from 5,10-methylenetetrahydrofolate is transferred onto alpha-ketoisovalerate to form ketopantoate. The sequence is that of 3-methyl-2-oxobutanoate hydroxymethyltransferase from Cupriavidus pinatubonensis (strain JMP 134 / LMG 1197) (Cupriavidus necator (strain JMP 134)).